The sequence spans 422 residues: La-related protein 6A (422 aa).

A disordered region spans residues 1-94 (MSSLPLRSGE…DHGENPVETD (94 aa)). Over residues 48-61 (VTESSDDVVVNVSE) the composition is skewed to low complexity. Positions 73-89 (DHERNSGEDRDQDHGEN) are enriched in basic and acidic residues. The HTH La-type RNA-binding domain occupies 97-188 (VVPIDELNQK…KRLSPLPEIR (92 aa)). The 91-residue stretch at 193 to 283 (FTVLVENLPE…NGLRVKLLEQ (91 aa)) folds into the RRM domain. Residues 286–422 (GKFAQRRPAR…PTSTQTSHEV (137 aa)) form a disordered region. Positions 295–348 (RREVDKEKDTTGRVHDQTGGEKNKKTREHQNHRLHHSDNPADDDGGNHQKDKNG) are enriched in basic and acidic residues.

Its subcellular location is the nucleus. Transcriptional regulator. This chain is La-related protein 6A (LARP6A), found in Arabidopsis thaliana (Mouse-ear cress).